Reading from the N-terminus, the 1583-residue chain is Transcriptional activator GLI3 (1583 aa).

Met-1 carries the N-acetylmethionine modification. Composition is skewed to polar residues over residues 1-10 (MEAQAHSSTA) and 58-78 (ITMQ…PSTS). The interval 1–78 (MEAQAHSSTA…NKISEEPSTS (78 aa)) is disordered. Arg-175 carries the post-translational modification Omega-N-methylarginine. Residues 368–475 (QSLGSAFGHS…DKDESKQEPE (108 aa)) form a disordered region. Low complexity predominate over residues 403-421 (VQVSSGPSESSQSKPTSES). A Glycyl lysine isopeptide (Lys-Gly) (interchain with G-Cter in SUMO2) cross-link involves residue Lys-438. Positions 448 to 457 (SRGQQEQPEG) are enriched in polar residues. The segment covering 461 to 474 (VKEEADKDESKQEP) has biased composition (basic and acidic residues). Lys-462 participates in a covalent cross-link: Glycyl lysine isopeptide (Lys-Gly) (interchain with G-Cter in SUMO2). 5 consecutive C2H2-type zinc fingers follow at residues 480–505 (TNCH…NNDH), 513–540 (FVCR…MRRH), 546–570 (HKCT…LRSH), 576–601 (YVCE…NRTH), and 607–632 (YVCK…KTVH). Residues 620 to 728 (DPSSLRKHVK…PISNYSNSGL (109 aa)) form a disordered region. The span at 632–648 (HGPEAHVTKKQRGDMHP) shows a compositional bias: basic and acidic residues. At Ser-664 the chain carries Phosphoserine. A compositionally biased stretch (basic and acidic residues) spans 684–699 (SKREECLQVKTVKAEK). Positions 703–726 (SQPSPGGQSSCSSQQSPISNYSNS) are enriched in low complexity. A mediates interaction with DZIP1 region spans residues 745 to 845 (DETPIMDSTI…VDFTVLNTLN (101 aa)). A Glycyl lysine isopeptide (Lys-Gly) (interchain with G-Cter in ubiquitin) cross-link involves residue Lys-773. Lys-779 is covalently cross-linked (Glycyl lysine isopeptide (Lys-Gly) (interchain with G-Cter in SUMO2); alternate). A Glycyl lysine isopeptide (Lys-Gly) (interchain with G-Cter in ubiquitin); alternate cross-link involves residue Lys-779. Glycyl lysine isopeptide (Lys-Gly) (interchain with G-Cter in ubiquitin) cross-links involve residues Lys-784 and Lys-800. Residues 809-828 (GNGTQSNNNYSSGGPGTLLP) are disordered. Positions 810–820 (NGTQSNNNYSS) are enriched in polar residues. Phosphoserine; by PKA is present on residues Ser-849, Ser-865, Ser-877, Ser-907, Ser-980, and Ser-1006. Residues 863-880 (RSSGISPCFSSRRSSEAS) show a composition bias toward low complexity. Residues 863 to 918 (RSSGISPCFSSRRSSEASQAEGRPQNVSVADSYDPISTDASRRSSEASQGDGLPSL) are disordered. Residues 1164–1189 (EVSSGTSDLSSSKLKCGQQRPSAQQP) are disordered. Low complexity predominate over residues 1166–1175 (SSGTSDLSSS).

This sequence belongs to the GLI C2H2-type zinc-finger protein family. As to quaternary structure, the phosphorylated form interacts with BTRC. The full-length GLI3 form (GLI3FL) interacts with SUFU and this interaction regulates the formation of either repressor or activator forms of GLI3. Its association with SUFU is regulated by Hh signaling and dissociation of the SUFU-GLI3 interaction requires the presence of the ciliary motor KIF3A. Interacts with KIF7. The activator form of GLI3 (GLI3A) but not the repressor form (GLI3R) can interact with TRPS1. Interacts with ZIC1. Interacts with ZIC3 (via C2H2-type domains 3, 4 and 5); the interaction enhances its transcriptional activity. Interacts with WRD11; the interaction associates EMX1 with GLI3. Interacts with DZIP1; retains GLI3 within the cytoplasm. In terms of processing, phosphorylated by DYRK2 (in vitro). Phosphorylated on multiple sites by protein kinase A (PKA) and phosphorylation by PKA primes further phosphorylation by CK1 and GSK3. Phosphorylation is essential for its proteolytic processing. Transcriptional repressor GLI3R, a C-terminally truncated form, is generated from the full-length GLI3 protein (GLI3FL/GLI3-190) through proteolytic processing. This process requires PKA-primed phosphorylation of GLI3, ubiquitination of GLI3 and the presence of BTRC. GLI3FL is complexed with SUFU in the cytoplasm and is maintained in a neutral state. Without the Hh signal, the SUFU-GLI3 complex is recruited to cilia, leading to the efficient processing of GLI3FL into GLI3R. GLI3R formation leads to its dissociation from SUFU, allowing it to translocate into the nucleus, and repress Hh target genes. When Hh signaling is initiated, SUFU dissociates from GLI3FL and this has two consequences. First, GLI3R production is halted. Second, free GLI3FL translocates to the nucleus, where it is phosphorylated, destabilized, and converted to a transcriptional activator (GLI3A). Phosphorylated in vitro by ULK3.

The protein localises to the nucleus. It localises to the cytoplasm. The protein resides in the cell projection. It is found in the cilium. In terms of biological role, has a dual function as a transcriptional activator and a repressor of the sonic hedgehog (Shh) pathway, and plays a role in limb development. The full-length GLI3 form (GLI3FL) after phosphorylation and nuclear translocation, acts as an activator (GLI3A) while GLI3R, its C-terminally truncated form, acts as a repressor. A proper balance between the GLI3 activator and the repressor GLI3R, rather than the repressor gradient itself or the activator/repressor ratio gradient, specifies limb digit number and identity. In concert with TRPS1, plays a role in regulating the size of the zone of distal chondrocytes, in restricting the zone of PTHLH expression in distal cells and in activating chondrocyte proliferation. Binds to the minimal GLI-consensus sequence 5'-GGGTGGTC-3'. This chain is Transcriptional activator GLI3 (Gli3), found in Mus musculus (Mouse).